A 297-amino-acid chain; its full sequence is Aspartate dehydrogenase domain-containing protein (297 aa).

Phosphoserine occurs at positions 24 and 172.

The protein belongs to the L-aspartate dehydrogenase family.

This is Aspartate dehydrogenase domain-containing protein from Rattus norvegicus (Rat).